The chain runs to 437 residues: Serine hydroxymethyltransferase (437 aa).

(6S)-5,6,7,8-tetrahydrofolate contacts are provided by residues Leu130 and 134–136 (GHL). Residue Lys239 is modified to N6-(pyridoxal phosphate)lysine.

Belongs to the SHMT family. In terms of assembly, homodimer. Pyridoxal 5'-phosphate is required as a cofactor.

It is found in the cytoplasm. The enzyme catalyses (6R)-5,10-methylene-5,6,7,8-tetrahydrofolate + glycine + H2O = (6S)-5,6,7,8-tetrahydrofolate + L-serine. It participates in one-carbon metabolism; tetrahydrofolate interconversion. The protein operates within amino-acid biosynthesis; glycine biosynthesis; glycine from L-serine: step 1/1. Catalyzes the reversible interconversion of serine and glycine with tetrahydrofolate (THF) serving as the one-carbon carrier. This reaction serves as the major source of one-carbon groups required for the biosynthesis of purines, thymidylate, methionine, and other important biomolecules. Also exhibits THF-independent aldolase activity toward beta-hydroxyamino acids, producing glycine and aldehydes, via a retro-aldol mechanism. This chain is Serine hydroxymethyltransferase, found in Bartonella quintana (strain Toulouse) (Rochalimaea quintana).